The primary structure comprises 744 residues: Tripartite motif-containing protein 2 (744 aa).

The residue at position 10 (serine 10) is a Phosphoserine. An RING-type zinc finger spans residues 23-64 (CSICLERYKNPKVLPCLHTFCERCLQNYIPAHSLTLSCPVCR). Residues 113 to 154 (GKPLSCPNHDGNVMEFYCQSCETAMCRECTEGEHAEHPTVPL) form a B box-type zinc finger. Positions 118, 121, 141, and 146 each coordinate Zn(2+). The Filamin repeat unit spans residues 320-421 (TTNAVASETV…IRGSPFKLKV (102 aa)). Position 371 is a phosphothreonine (threonine 371). 3 positions are modified to phosphoserine: serine 375, serine 424, and serine 428. The interval 432-462 (EGVKRRVKSPGSGHVKQKAVKRPASMYSTGK) is disordered. NHL repeat units follow at residues 473-516 (IFRV…FSND), 520-563 (KSRF…FSSD), 564-605 (GKFK…FQPN), 609-652 (VTRF…FNQE), 656-699 (MLKF…FDGS), and 700-743 (GSFL…YRYL).

It belongs to the TRIM/RBCC family. Forms homooligomers. Interacts with TRIM3; this interaction reduces TRIM2 activity. Interacts with myosin V; myosin V may not be a substrate for ubiquitination. Interacts with NEFL. Interacts with phosphorylated BCL2L11. Interacts with SIRPA. In terms of processing, RING-type zinc finger-dependent and UBE2D1-dependent autoubiquitination.

It localises to the cytoplasm. The catalysed reaction is S-ubiquitinyl-[E2 ubiquitin-conjugating enzyme]-L-cysteine + [acceptor protein]-L-lysine = [E2 ubiquitin-conjugating enzyme]-L-cysteine + N(6)-ubiquitinyl-[acceptor protein]-L-lysine.. The protein operates within protein modification; protein ubiquitination. Functionally, UBE2D1-dependent E3 ubiquitin-protein ligase that mediates the ubiquitination of NEFL and of phosphorylated BCL2L11. Plays a neuroprotective function. May play a role in neuronal rapid ischemic tolerance. Plays a role in antiviral immunity and limits New World arenavirus infection independently of its ubiquitin ligase activity. The protein is Tripartite motif-containing protein 2 (TRIM2) of Callithrix jacchus (White-tufted-ear marmoset).